The primary structure comprises 164 residues: UPF0114 protein KPN78578_33570 (164 aa).

The next 4 membrane-spanning stretches (helical) occupy residues 15-35 (LLAPVYFGLSLGLIALTIKFF), 53-73 (MILTLLSLVDMTLVGGLLVMV), 109-126 (VAASIVAISSIHLLRVFM), and 136-156 (LMWYVIIHLTFVLSAFVMGYL).

The protein belongs to the UPF0114 family.

The protein resides in the cell membrane. This Klebsiella pneumoniae subsp. pneumoniae (strain ATCC 700721 / MGH 78578) protein is UPF0114 protein KPN78578_33570.